The primary structure comprises 670 residues: Serine/threonine-rich protein adg2 (670 aa).

The first 19 residues, 1 to 19 (MRRLTISGLLISLAKLCAG), serve as a signal peptide directing secretion. Asparagine 77, asparagine 159, asparagine 204, asparagine 224, asparagine 274, asparagine 297, asparagine 327, asparagine 351, asparagine 370, asparagine 381, asparagine 405, asparagine 424, asparagine 435, asparagine 459, asparagine 478, asparagine 489, and asparagine 513 each carry an N-linked (GlcNAc...) asparagine glycan. The tract at residues 526–651 (GSVSSFSSSP…MSLPPSAGSS (126 aa)) is disordered.

It is found in the secreted. The protein localises to the endoplasmic reticulum. In Schizosaccharomyces pombe (strain 972 / ATCC 24843) (Fission yeast), this protein is Serine/threonine-rich protein adg2 (adg2).